Consider the following 358-residue polypeptide: Arginine kinase (358 aa).

A Phosphagen kinase N-terminal domain is found at 2–84; it reads SDADLFSKLD…LDEVIKDYHK (83 aa). 57 to 61 provides a ligand contact to substrate; that stretch reads GVGIY. The Phosphagen kinase C-terminal domain occupies 112–350; that stretch reads FIVSTRVRVG…EEILKREKEL (239 aa). Residues 115–119 and His-178 each bind ATP; that span reads STRVR. Substrate is bound at residue Glu-218. Arg-222 provides a ligand contact to ATP. Residue Cys-265 participates in substrate binding. Residues 274 to 278 and 303 to 308 contribute to the ATP site; these read RASVH and RGIHGE. Glu-308 is a binding site for substrate.

Belongs to the ATP:guanido phosphotransferase family.

It carries out the reaction L-arginine + ATP = N(omega)-phospho-L-arginine + ADP + H(+). The polypeptide is Arginine kinase (Turbo cornutus (Horned turban)).